A 94-amino-acid polypeptide reads, in one-letter code: Phosphoribosyl-ATP pyrophosphatase (94 aa).

It belongs to the PRA-PH family.

It is found in the cytoplasm. The catalysed reaction is 1-(5-phospho-beta-D-ribosyl)-ATP + H2O = 1-(5-phospho-beta-D-ribosyl)-5'-AMP + diphosphate + H(+). The protein operates within amino-acid biosynthesis; L-histidine biosynthesis; L-histidine from 5-phospho-alpha-D-ribose 1-diphosphate: step 2/9. The sequence is that of Phosphoribosyl-ATP pyrophosphatase (hisE) from Pyrobaculum aerophilum (strain ATCC 51768 / DSM 7523 / JCM 9630 / CIP 104966 / NBRC 100827 / IM2).